The primary structure comprises 185 residues: Large ribosomal subunit protein uL5m (185 aa).

Belongs to the universal ribosomal protein uL5 family. As to quaternary structure, component of the mitochondrial ribosome large subunit.

The protein localises to the mitochondrion. This is Large ribosomal subunit protein uL5m (RPL5) from Arabidopsis thaliana (Mouse-ear cress).